A 457-amino-acid chain; its full sequence is Argininosuccinate lyase (457 aa).

The protein belongs to the lyase 1 family. Argininosuccinate lyase subfamily.

Its subcellular location is the cytoplasm. It catalyses the reaction 2-(N(omega)-L-arginino)succinate = fumarate + L-arginine. It functions in the pathway amino-acid biosynthesis; L-arginine biosynthesis; L-arginine from L-ornithine and carbamoyl phosphate: step 3/3. This Histophilus somni (strain 129Pt) (Haemophilus somnus) protein is Argininosuccinate lyase.